The following is a 201-amino-acid chain: UPF0301 protein Avi_1069 (201 aa).

This sequence belongs to the UPF0301 (AlgH) family.

This is UPF0301 protein Avi_1069 from Allorhizobium ampelinum (strain ATCC BAA-846 / DSM 112012 / S4) (Agrobacterium vitis (strain S4)).